Here is a 518-residue protein sequence, read N- to C-terminus: Probable glycosyltransferase At5g03795 (518 aa).

Topologically, residues 1-25 (MGDEDVDGKCKNMSACSSTTSYSTK) are cytoplasmic. A helical; Signal-anchor for type II membrane protein transmembrane segment spans residues 26–46 (LFLFMVPLVVISGFVFVNIGP). Topologically, residues 47–518 (KDSTSLLTSL…RRLNVKIREV (472 aa)) are lumenal. N-linked (GlcNAc...) asparagine glycosylation is found at N104, N113, N120, N282, and N320.

This sequence belongs to the glycosyltransferase 47 family.

It localises to the golgi apparatus membrane. Its function is as follows. May be involved in cell wall biosynthesis. The polypeptide is Probable glycosyltransferase At5g03795 (Arabidopsis thaliana (Mouse-ear cress)).